Consider the following 91-residue polypeptide: Cell division topological specificity factor (91 aa).

The protein belongs to the MinE family.

In terms of biological role, prevents the cell division inhibition by proteins MinC and MinD at internal division sites while permitting inhibition at polar sites. This ensures cell division at the proper site by restricting the formation of a division septum at the midpoint of the long axis of the cell. The sequence is that of Cell division topological specificity factor from Wigglesworthia glossinidia brevipalpis.